Here is a 100-residue protein sequence, read N- to C-terminus: Urease subunit gamma (100 aa).

Belongs to the urease gamma subunit family. In terms of assembly, heterotrimer of UreA (gamma), UreB (beta) and UreC (alpha) subunits. Three heterotrimers associate to form the active enzyme.

It localises to the cytoplasm. The catalysed reaction is urea + 2 H2O + H(+) = hydrogencarbonate + 2 NH4(+). It functions in the pathway nitrogen metabolism; urea degradation; CO(2) and NH(3) from urea (urease route): step 1/1. This is Urease subunit gamma from Nitrosococcus oceani (strain ATCC 19707 / BCRC 17464 / JCM 30415 / NCIMB 11848 / C-107).